The primary structure comprises 464 residues: Chromosomal replication initiator protein DnaA (464 aa).

The tract at residues 1-90 is domain I, interacts with DnaA modulators; sequence MNNDNTEVLE…KYWQDEDQSI (90 aa). Residues 90–126 are domain II; sequence ICSVDICVVSNQDPNLLVDIKDRVDRGIKGNCDNVSS. Residues 127 to 345 form a domain III, AAA+ region region; that stretch reads PLDPRFTFDN…GALNKVVAHS (219 aa). Positions 173, 175, 176, and 177 each coordinate ATP. The domain IV, binds dsDNA stretch occupies residues 346-464; that stretch reads SLVGCSITLD…DINLLNRMLR (119 aa).

The protein belongs to the DnaA family. In terms of assembly, oligomerizes as a right-handed, spiral filament on DNA at oriC.

The protein localises to the cytoplasm. Functionally, plays an essential role in the initiation and regulation of chromosomal replication. ATP-DnaA binds to the origin of replication (oriC) to initiate formation of the DNA replication initiation complex once per cell cycle. Binds the DnaA box (a 9 base pair repeat at the origin) and separates the double-stranded (ds)DNA. Forms a right-handed helical filament on oriC DNA; dsDNA binds to the exterior of the filament while single-stranded (ss)DNA is stabiized in the filament's interior. The ATP-DnaA-oriC complex binds and stabilizes one strand of the AT-rich DNA unwinding element (DUE), permitting loading of DNA polymerase. After initiation quickly degrades to an ADP-DnaA complex that is not apt for DNA replication. Binds acidic phospholipids. This chain is Chromosomal replication initiator protein DnaA, found in Ehrlichia ruminantium (strain Gardel).